We begin with the raw amino-acid sequence, 380 residues long: Serpin B7 (380 aa).

2 positions are modified to phosphoserine: serine 217 and serine 223.

The protein belongs to the serpin family. Ov-serpin subfamily. As to expression, predominantly expressed in mesangial cells. Expressed in the epidermis of the whole body.

The protein resides in the cytoplasm. Functionally, might function as an inhibitor of Lys-specific proteases. Might influence the maturation of megakaryocytes via its action as a serpin. The polypeptide is Serpin B7 (SERPINB7) (Homo sapiens (Human)).